A 350-amino-acid chain; its full sequence is tRNA uridine(34) hydroxylase (350 aa).

A Rhodanese domain is found at 146 to 240 (DDPDALFIDM…YARKAREQGL (95 aa)). C200 serves as the catalytic Cysteine persulfide intermediate.

The protein belongs to the TrhO family.

It carries out the reaction uridine(34) in tRNA + AH2 + O2 = 5-hydroxyuridine(34) in tRNA + A + H2O. Catalyzes oxygen-dependent 5-hydroxyuridine (ho5U) modification at position 34 in tRNAs, the first step in 5-carboxymethoxyuridine (cmo5U) biosynthesis. May be part of an alternate pathway, which is able to bypass cmo5U biogenesis in a subset of tRNAs under aerobic conditions. The chain is tRNA uridine(34) hydroxylase from Escherichia coli O81 (strain ED1a).